The following is a 231-amino-acid chain: Lipoprotein-releasing system ATP-binding protein LolD (231 aa).

The ABC transporter domain maps to 11 to 231 (LQAEHLGKVY…HMENGRLQPD (221 aa)). 47–54 (GASGSGKS) contributes to the ATP binding site.

This sequence belongs to the ABC transporter superfamily. Lipoprotein translocase (TC 3.A.1.125) family. The complex is composed of two ATP-binding proteins (LolD) and two transmembrane proteins (LolC and LolE).

It is found in the cell inner membrane. In terms of biological role, part of the ABC transporter complex LolCDE involved in the translocation of mature outer membrane-directed lipoproteins, from the inner membrane to the periplasmic chaperone, LolA. Responsible for the formation of the LolA-lipoprotein complex in an ATP-dependent manner. The polypeptide is Lipoprotein-releasing system ATP-binding protein LolD (Bordetella bronchiseptica (strain ATCC BAA-588 / NCTC 13252 / RB50) (Alcaligenes bronchisepticus)).